Consider the following 264-residue polypeptide: MDTRPIGFLDSGVGGLTVVCELIRQLPHEKIVYIGDSARAPYGPRPKKQIKEYTWELVNFLLTQNVKMIVFACNTATAVAWEEVKAALDIPVLGVVLPGASAAIKSTTKGQVGVIGTPMTVASDIYRKKIQLLAPSIQVRSLACPKFVPIVESNEMCSSIAKKIVYDSLAPLVGKIDTLVLGCTHYPLLRPIIQNVMGPSVKLIDSGAECVRDISVLLNYFDINGNYHQKAVKHRFFTTANPEIFQEIASIWLKQKINVEHVTL.

Residues 10–11 (DS) and 42–43 (YG) each bind substrate. Cysteine 73 functions as the Proton donor/acceptor in the catalytic mechanism. Position 74-75 (74-75 (NT)) interacts with substrate. The Proton donor/acceptor role is filled by cysteine 183. 184-185 (TH) is a substrate binding site.

Belongs to the aspartate/glutamate racemases family.

The catalysed reaction is L-glutamate = D-glutamate. It functions in the pathway cell wall biogenesis; peptidoglycan biosynthesis. In terms of biological role, provides the (R)-glutamate required for cell wall biosynthesis. In Streptococcus pyogenes serotype M49 (strain NZ131), this protein is Glutamate racemase.